The sequence spans 722 residues: Cellulose synthase-like protein G2 (722 aa).

2 consecutive transmembrane segments (helical) span residues 25-45 (IYAVFHTCGIIALMYHHVHSI) and 51-71 (TLITCLLLLSDIVLAFMWATT). Catalysis depends on residues aspartate 139 and aspartate 437. A run of 6 helical transmembrane segments spans residues 514–534 (FWPFWCIPLVVYGILPQVALI), 548–568 (FWLYIILFLGGYAQDLSDFLL), 583–605 (WMVRGLSSFFFGFTEFTLKTLNL), 635–655 (PSSSMFLPITTVAIMNLLAFM), 660–680 (GIFTWGEGPVLELMLASFAVV), and 702–722 (ICFLAGLLSFVLTGSGYFFLK).

The protein belongs to the glycosyltransferase 2 family. Plant cellulose synthase-like G subfamily. In terms of tissue distribution, expressed in young seedlings, primarily in the vascular tissue.

The protein localises to the golgi apparatus membrane. Functionally, thought to be a Golgi-localized beta-glycan synthase that polymerize the backbones of noncellulosic polysaccharides (hemicelluloses) of plant cell wall. This is Cellulose synthase-like protein G2 (CSLG2) from Arabidopsis thaliana (Mouse-ear cress).